Here is an 80-residue protein sequence, read N- to C-terminus: DNA-binding protein HU-like (80 aa).

It belongs to the bacterial histone-like protein family.

Histone-like DNA-binding protein which is capable of wrapping DNA to stabilize it, and thus to prevent its denaturation under extreme environmental conditions. This chain is DNA-binding protein HU-like, found in Rickettsia conorii (strain ATCC VR-613 / Malish 7).